The sequence spans 430 residues: UDP-N-acetylglucosamine 1-carboxyvinyltransferase 1 (430 aa).

Residue 22–23 (KN) participates in phosphoenolpyruvate binding. Arginine 93 contributes to the UDP-N-acetyl-alpha-D-glucosamine binding site. Cysteine 117 acts as the Proton donor in catalysis. The residue at position 117 (cysteine 117) is a 2-(S-cysteinyl)pyruvic acid O-phosphothioketal. UDP-N-acetyl-alpha-D-glucosamine contacts are provided by residues 122–126 (RPVDL), aspartate 305, and valine 327.

This sequence belongs to the EPSP synthase family. MurA subfamily.

The protein resides in the cytoplasm. It carries out the reaction phosphoenolpyruvate + UDP-N-acetyl-alpha-D-glucosamine = UDP-N-acetyl-3-O-(1-carboxyvinyl)-alpha-D-glucosamine + phosphate. Its pathway is cell wall biogenesis; peptidoglycan biosynthesis. In terms of biological role, cell wall formation. Adds enolpyruvyl to UDP-N-acetylglucosamine. The chain is UDP-N-acetylglucosamine 1-carboxyvinyltransferase 1 from Listeria monocytogenes serovar 1/2a (strain ATCC BAA-679 / EGD-e).